The following is a 54-amino-acid chain: Anti-adapter protein SpxO (54 aa).

In terms of assembly, interacts with SpxH.

Its function is as follows. Inhibitor of Spx proteolytic control. Acts by interacting with SpxH/YjbH, which disrupts interaction between SpxH and Spx, and inhibits SpxH-enhanced proteolysis of Spx by ClpXP. Required for the stabilization of Spx and activation of Spx-regulated genes in response to cell wall stress. In Bacillus subtilis (strain 168), this protein is Anti-adapter protein SpxO.